Here is a 224-residue protein sequence, read N- to C-terminus: MSLMNLPEESRPREKLLALGPKSLTDAELLAIFLRTGIKGMNAIELADKLLKEFGSLRKLLGSNENEFCSHKGLGTAKFAQLQAVVEMTERYLFEKIEKEDALTSPEHTKRYLTRILRDRHREAFYVLFLDNQHRVLKGEVLFEGTIDAAAVYPREVVKRSIDYNAAAIILAHNHPSGVAEPSQADRRITKRISDAVELVDIRVLDHFVIGDGEIVSFAERGWI.

The 123-residue stretch at 102-224 folds into the MPN domain; it reads ALTSPEHTKR…IVSFAERGWI (123 aa). Zn(2+) contacts are provided by His173, His175, and Asp186. Positions 173 to 186 match the JAMM motif motif; that stretch reads HNHPSGVAEPSQAD.

Belongs to the UPF0758 family.

The protein is UPF0758 protein VSAL_I0192 of Aliivibrio salmonicida (strain LFI1238) (Vibrio salmonicida (strain LFI1238)).